The sequence spans 493 residues: Galactose-1-phosphate uridylyltransferase (493 aa).

The protein belongs to the galactose-1-phosphate uridylyltransferase type 2 family.

It is found in the cytoplasm. The enzyme catalyses alpha-D-galactose 1-phosphate + UDP-alpha-D-glucose = alpha-D-glucose 1-phosphate + UDP-alpha-D-galactose. Its pathway is carbohydrate metabolism; galactose metabolism. In Streptococcus thermophilus (strain ATCC BAA-250 / LMG 18311), this protein is Galactose-1-phosphate uridylyltransferase.